The following is a 65-amino-acid chain: Small ribosomal subunit protein bS21 (65 aa).

This sequence belongs to the bacterial ribosomal protein bS21 family.

The chain is Small ribosomal subunit protein bS21 from Cytophaga hutchinsonii (strain ATCC 33406 / DSM 1761 / CIP 103989 / NBRC 15051 / NCIMB 9469 / D465).